The following is a 307-amino-acid chain: tRNA-cytidine(32) 2-sulfurtransferase (307 aa).

Positions 44–49 (SGGKDS) match the PP-loop motif motif. Positions 119, 122, and 210 each coordinate [4Fe-4S] cluster.

Belongs to the TtcA family. In terms of assembly, homodimer. Mg(2+) serves as cofactor. It depends on [4Fe-4S] cluster as a cofactor.

The protein localises to the cytoplasm. It catalyses the reaction cytidine(32) in tRNA + S-sulfanyl-L-cysteinyl-[cysteine desulfurase] + AH2 + ATP = 2-thiocytidine(32) in tRNA + L-cysteinyl-[cysteine desulfurase] + A + AMP + diphosphate + H(+). Its pathway is tRNA modification. In terms of biological role, catalyzes the ATP-dependent 2-thiolation of cytidine in position 32 of tRNA, to form 2-thiocytidine (s(2)C32). The sulfur atoms are provided by the cysteine/cysteine desulfurase (IscS) system. The chain is tRNA-cytidine(32) 2-sulfurtransferase from Aliivibrio fischeri (strain ATCC 700601 / ES114) (Vibrio fischeri).